Consider the following 585-residue polypeptide: A-type ATP synthase subunit A (585 aa).

231-238 serves as a coordination point for ATP; sequence GPFGSGKT.

This sequence belongs to the ATPase alpha/beta chains family. Has multiple subunits with at least A(3), B(3), C, D, E, F, H, I and proteolipid K(x).

It localises to the cell membrane. It carries out the reaction ATP + H2O + 4 H(+)(in) = ADP + phosphate + 5 H(+)(out). Functionally, component of the A-type ATP synthase that produces ATP from ADP in the presence of a proton gradient across the membrane. The A chain is the catalytic subunit. The chain is A-type ATP synthase subunit A from Thermococcus sibiricus (strain DSM 12597 / MM 739).